The primary structure comprises 137 residues: Large ribosomal subunit protein uL16 (137 aa).

This sequence belongs to the universal ribosomal protein uL16 family. In terms of assembly, part of the 50S ribosomal subunit.

In terms of biological role, binds 23S rRNA and is also seen to make contacts with the A and possibly P site tRNAs. In Aromatoleum aromaticum (strain DSM 19018 / LMG 30748 / EbN1) (Azoarcus sp. (strain EbN1)), this protein is Large ribosomal subunit protein uL16.